The primary structure comprises 238 residues: CD63 antigen (238 aa).

Residues 1–11 are Cytoplasmic-facing; sequence MAVEGGMKCVK. Residues 12 to 32 form a helical membrane-spanning segment; the sequence is FLLYVLLLAFCACAVGLIAIG. Residues 33-51 lie on the Extracellular side of the membrane; the sequence is VAVQVVLKQAITHETTAGS. The helical transmembrane segment at 52 to 72 threads the bilayer; that stretch reads LLPVVIIAVGAFLFLVAFVGC. Over 73–81 the chain is Cytoplasmic; that stretch reads CGACKENYC. The chain crosses the membrane as a helical span at residues 82–102; that stretch reads LMITFAIFLSLIMLVEVAVAI. Over 103 to 203 the chain is Extracellular; it reads AGYVFRDQVK…TIAIWLRKNI (101 aa). 4 N-linked (GlcNAc...) asparagine glycosylation sites follow: Asn116, Asn130, Asn150, and Asn172. Residues 204-224 traverse the membrane as a helical segment; it reads LLVAAAALGIAFVEVLGIIFS. At 225–238 the chain is on the cytoplasmic side; it reads CCLVKSIRSGYEVM. Positions 234 to 238 match the Lysosomal targeting motif motif; that stretch reads GYEVM.

It belongs to the tetraspanin (TM4SF) family. Interacts with TIMP1 and ITGB1 and recruits TIMP1 to ITGB1. Interacts with CD9. Identified in a complex with CD9 and ITGB3. Interacts with PMEL. Interacts with KDR/VEGFR2; identified in a complex with ITGB1 and KDR/VEGFR2 and is required to recruit KDR to ITGB1 complexes. Interacts with SYT7. Palmitoylated at a low, basal level in unstimulated platelets. The level of palmitoylation increases when platelets are activated by thrombin (in vitro). As to expression, ubiquitous. Strongly expressed in kidney. Detected in spleen, bone marrow, peripheral blood mononuclear cells and macrophages.

The protein resides in the cell membrane. The protein localises to the lysosome membrane. It is found in the late endosome membrane. Its subcellular location is the endosome. It localises to the multivesicular body. The protein resides in the melanosome. The protein localises to the secreted. It is found in the extracellular exosome. Its subcellular location is the cell surface. Functionally, functions as a cell surface receptor for TIMP1 and plays a role in the activation of cellular signaling cascades. Plays a role in the activation of ITGB1 and integrin signaling, leading to the activation of AKT, FAK/PTK2 and MAP kinases. Promotes cell survival, reorganization of the actin cytoskeleton, cell adhesion, spreading and migration, via its role in the activation of AKT and FAK/PTK2. Plays a role in VEGFA signaling via its role in regulating the internalization of KDR/VEGFR2. Plays a role in intracellular vesicular transport processes, and is required for normal trafficking of the PMEL luminal domain that is essential for the development and maturation of melanocytes. Plays a role in the adhesion of leukocytes onto endothelial cells via its role in the regulation of SELP trafficking. May play a role in mast cell degranulation in response to Ms4a2/FceRI stimulation, but not in mast cell degranulation in response to other stimuli. The chain is CD63 antigen (Cd63) from Mus musculus (Mouse).